The following is a 431-amino-acid chain: Trigger factor (431 aa).

A PPIase FKBP-type domain is found at 163 to 248 (GHFAVIDFTG…LSEIKVKELP (86 aa)).

Belongs to the FKBP-type PPIase family. Tig subfamily.

It localises to the cytoplasm. The catalysed reaction is [protein]-peptidylproline (omega=180) = [protein]-peptidylproline (omega=0). Its function is as follows. Involved in protein export. Acts as a chaperone by maintaining the newly synthesized protein in an open conformation. Functions as a peptidyl-prolyl cis-trans isomerase. The polypeptide is Trigger factor (Geobacter sulfurreducens (strain ATCC 51573 / DSM 12127 / PCA)).